We begin with the raw amino-acid sequence, 698 residues long: Zinc finger CCCH domain-containing protein 7 (698 aa).

Positions Met1–Ala11 are enriched in pro residues. Disordered regions lie at residues Met1 to Thr23, His56 to Arg95, Ala109 to Thr137, and Gly272 to Ser300. Composition is skewed to low complexity over residues Ala12–Pro21 and Glu65–Pro74. Over residues Glu281–Ser300 the composition is skewed to acidic residues. C3H1-type zinc fingers lie at residues Pro429–Thr456, Leu458–Ser485, and Lys486–Pro511. Disordered stretches follow at residues Thr512 to Ala553 and Thr607 to Val682. Polar residues-rich tracts occupy residues Cys535–Tyr548 and Ser665–His680.

This Oryza sativa subsp. japonica (Rice) protein is Zinc finger CCCH domain-containing protein 7.